The following is a 1077-amino-acid chain: Disheveled-associated activator of morphogenesis 1 (1077 aa).

Serine 34 carries the post-translational modification Phosphoserine. The GBD/FH3 domain maps to 45–420 (LPMPPVEELD…QIVIQNDKGQ (376 aa)). Positions 437-526 (RMLVNENEVK…ELNRRAVCAA (90 aa)) form a coiled coil. Disordered stretches follow at residues 457 to 478 (KEHN…AKTQ) and 526 to 596 (AVPG…PVSL). One can recognise an FH1 domain in the interval 528-599 (PGGPSPGAPG…PGAPVSLTLK (72 aa)). 2 stretches are compositionally biased toward pro residues: residues 530–539 (GPSPGAPGGP) and 549–592 (LPPP…PPGA). The FH2 domain maps to 600–1008 (KKNIPQPTNA…EERRARLEAQ (409 aa)). The segment at 693-702 (QNCNILLSRL) is actin-binding. Residues 1007 to 1026 (AQLKEQRERERKVRKAKESS) are compositionally biased toward basic and acidic residues. Disordered regions lie at residues 1007-1033 (AQLK…GEFD) and 1056-1077 (RKRI…KLNF). Phosphoserine occurs at positions 1026 and 1029. The region spanning 1026–1057 (SEESGEFDDLVSALRSGEVFDKDLSKLKRNRK) is the DAD domain. Over residues 1066-1077 (SSRERPITKLNF) the composition is skewed to basic and acidic residues.

This sequence belongs to the formin homology family. As to quaternary structure, interacts with CIP4, FNBP1 and FNBP1L. Interacts with the SH3 domains of Abl, BTK, endophilin, spectrin and SRC. Binds specifically to GTP-bound CDC42 and RHOA. Interacts with INTU; INTU mediates the indirect interaction between DAAM1 and NPHP4. Interacts (via coiled coil domain) with KANK1 (via coiled coil domain). In early embryogenesis, expressed in embryonic and extraembryonic ectoderm. In later stages of gastrulation, expressed also in somites and ribs and posterior vertebrae of developing skeletal system. During organogenesis, expressed in CNS, PNS, stomach, liver and limb bud.

It localises to the cytoplasm. It is found in the cytoskeleton. The protein localises to the cilium basal body. In terms of biological role, binds to disheveled (Dvl) and Rho, and mediates Wnt-induced Dvl-Rho complex formation. May play a role as a scaffolding protein to recruit Rho-GDP and Rho-GEF, thereby enhancing Rho-GTP formation. Can direct nucleation and elongation of new actin filaments. Involved in building functional cilia. Involved in the organization of the subapical actin network in multiciliated epithelial cells. Together with DAAM2, required for myocardial maturation and sarcomere assembly. During cell division, may regulate RHOA activation that signals spindle orientation and chromosomal segregation. The chain is Disheveled-associated activator of morphogenesis 1 (Daam1) from Mus musculus (Mouse).